The primary structure comprises 88 residues: Small ribosomal subunit protein uS17 (88 aa).

This sequence belongs to the universal ribosomal protein uS17 family. In terms of assembly, part of the 30S ribosomal subunit.

Functionally, one of the primary rRNA binding proteins, it binds specifically to the 5'-end of 16S ribosomal RNA. This chain is Small ribosomal subunit protein uS17, found in Pseudomonas putida (strain ATCC 700007 / DSM 6899 / JCM 31910 / BCRC 17059 / LMG 24140 / F1).